The sequence spans 126 residues: Type II methyltransferase M.HgiGI (126 aa).

Residues 1–126 enclose the SAM-dependent MTase C5-type domain; sequence MKTIDLFAGC…ARLSKIHQQA (126 aa). Cysteine 75 is an active-site residue.

Belongs to the class I-like SAM-binding methyltransferase superfamily. C5-methyltransferase family.

The enzyme catalyses a 2'-deoxycytidine in DNA + S-adenosyl-L-methionine = a 5-methyl-2'-deoxycytidine in DNA + S-adenosyl-L-homocysteine + H(+). Its function is as follows. A methylase, recognizes the double-stranded sequence 5'-GRCGYC-3', methylates C-? on both strands, and protects the DNA from cleavage by the HgiEI endonuclease. The protein is Type II methyltransferase M.HgiGI of Herpetosiphon aurantiacus (Herpetosiphon giganteus).